The sequence spans 158 residues: NAD(P)H-quinone oxidoreductase subunit J, chloroplastic (158 aa).

It belongs to the complex I 30 kDa subunit family. In terms of assembly, NDH is composed of at least 16 different subunits, 5 of which are encoded in the nucleus.

It localises to the plastid. The protein resides in the chloroplast thylakoid membrane. The catalysed reaction is a plastoquinone + NADH + (n+1) H(+)(in) = a plastoquinol + NAD(+) + n H(+)(out). It catalyses the reaction a plastoquinone + NADPH + (n+1) H(+)(in) = a plastoquinol + NADP(+) + n H(+)(out). Its function is as follows. NDH shuttles electrons from NAD(P)H:plastoquinone, via FMN and iron-sulfur (Fe-S) centers, to quinones in the photosynthetic chain and possibly in a chloroplast respiratory chain. The immediate electron acceptor for the enzyme in this species is believed to be plastoquinone. Couples the redox reaction to proton translocation, and thus conserves the redox energy in a proton gradient. This Nuphar advena (Common spatterdock) protein is NAD(P)H-quinone oxidoreductase subunit J, chloroplastic.